We begin with the raw amino-acid sequence, 258 residues long: Synapse differentiation-inducing gene protein 1 (258 aa).

Over 1–181 (MDGIIEQKSV…NFLMMPPRDH (181 aa)) the chain is Cytoplasmic. Residue S137 is modified to Phosphoserine. A helical transmembrane segment spans residues 182 to 202 (LGLSVFSMLCCFWPLGIAAFY). Over 203-228 (LSHETNKAVAKGDFHQASTSSRRALF) the chain is Extracellular. An intramembrane region (helical) is located at residues 229–249 (LAVLSITIGTGIYVGVAVALI). At 250-258 (AYLSKNNHL) the chain is on the extracellular side.

Belongs to the CD225/Dispanin family. Homodimer. Interacts with GRIA1 and GRIA2. In terms of tissue distribution, brain-specific. Expressed in Purkinje neurons in cerebellum. Also detected in the hippocampus. Found at excitatory synapses and postsynaptic cells.

It is found in the cell membrane. It localises to the early endosome membrane. The protein localises to the postsynaptic density membrane. The protein resides in the synapse. Its subcellular location is the cell projection. It is found in the dendrite. It localises to the dendritic spine. May regulate AMPA receptor content at nascent synapses, and have a role in postsynaptic development and maturation. The protein is Synapse differentiation-inducing gene protein 1 (Syndig1) of Mus musculus (Mouse).